The primary structure comprises 111 residues: Cytochrome c-550 (111 aa).

Positions 13, 16, 17, and 90 each coordinate heme c.

In terms of processing, binds 1 heme c group covalently per subunit.

The sequence is that of Cytochrome c-550 from Novispirillum itersonii (Aquaspirillum itersonii).